We begin with the raw amino-acid sequence, 330 residues long: Aspartate--ammonia ligase (330 aa).

It belongs to the class-II aminoacyl-tRNA synthetase family. AsnA subfamily.

Its subcellular location is the cytoplasm. The catalysed reaction is L-aspartate + NH4(+) + ATP = L-asparagine + AMP + diphosphate + H(+). The protein operates within amino-acid biosynthesis; L-asparagine biosynthesis; L-asparagine from L-aspartate (ammonia route): step 1/1. The sequence is that of Aspartate--ammonia ligase from Shigella boydii serotype 18 (strain CDC 3083-94 / BS512).